The following is a 351-amino-acid chain: Peptide chain release factor 1 (351 aa).

The residue at position 229 (Gln-229) is an N5-methylglutamine.

This sequence belongs to the prokaryotic/mitochondrial release factor family. Methylated by PrmC. Methylation increases the termination efficiency of RF1.

The protein resides in the cytoplasm. Peptide chain release factor 1 directs the termination of translation in response to the peptide chain termination codons UAG and UAA. The protein is Peptide chain release factor 1 of Cereibacter sphaeroides (strain KD131 / KCTC 12085) (Rhodobacter sphaeroides).